The following is a 362-amino-acid chain: Phosphoserine aminotransferase (362 aa).

2 residues coordinate L-glutamate: S9 and R42. Residues 76 to 77 (GR), W102, T153, D174, and Q197 contribute to the pyridoxal 5'-phosphate site. The residue at position 198 (K198) is an N6-(pyridoxal phosphate)lysine. 239-240 (NT) is a binding site for pyridoxal 5'-phosphate.

It belongs to the class-V pyridoxal-phosphate-dependent aminotransferase family. SerC subfamily. Homodimer. Pyridoxal 5'-phosphate serves as cofactor.

It is found in the cytoplasm. It carries out the reaction O-phospho-L-serine + 2-oxoglutarate = 3-phosphooxypyruvate + L-glutamate. The enzyme catalyses 4-(phosphooxy)-L-threonine + 2-oxoglutarate = (R)-3-hydroxy-2-oxo-4-phosphooxybutanoate + L-glutamate. The protein operates within amino-acid biosynthesis; L-serine biosynthesis; L-serine from 3-phospho-D-glycerate: step 2/3. It participates in cofactor biosynthesis; pyridoxine 5'-phosphate biosynthesis; pyridoxine 5'-phosphate from D-erythrose 4-phosphate: step 3/5. Catalyzes the reversible conversion of 3-phosphohydroxypyruvate to phosphoserine and of 3-hydroxy-2-oxo-4-phosphonooxybutanoate to phosphohydroxythreonine. In Salmonella choleraesuis (strain SC-B67), this protein is Phosphoserine aminotransferase.